The chain runs to 3391 residues: Genome polyprotein (3391 aa).

Positions 1 to 15 (MNNQRKKARNTPFNM) are interaction with host EXOC1. At 1-101 (MNNQRKKARN…LNILNRRRRT (101 aa)) the chain is on the cytoplasmic side. The hydrophobic; homodimerization of capsid protein C stretch occupies residues 37 to 72 (MLQGRGPLKLFMALVAFLRFLTIPPTAGILKRWGTI). Residues 101 to 114 (TAGMIIMLIPTVMA) constitute a propeptide, ER anchor for the capsid protein C, removed in mature form by serine protease NS3. Residues 102–122 (AGMIIMLIPTVMAFHLTTRNG) traverse the membrane as a helical segment. At 123 to 238 (EPHMIVSRQE…GAWKHAQRIE (116 aa)) the chain is on the extracellular side. A glycan (N-linked (GlcNAc...) asparagine; by host) is linked at asparagine 183. A helical membrane pass occupies residues 239–259 (TWILRHPGFTIMAAILAYTIG). The Cytoplasmic portion of the chain corresponds to 260 to 265 (TTHFQR). Residues 266–280 (ALIFILLTAVAPSMT) form a helical membrane-spanning segment. Residues 281-725 (MRCIGISNRD…LHQVFGAIYG (445 aa)) lie on the Extracellular side of the membrane. 4 disulfides stabilise this stretch: cysteine 283-cysteine 310, cysteine 340-cysteine 401, cysteine 354-cysteine 385, and cysteine 372-cysteine 396. Residue asparagine 347 is glycosylated (N-linked (GlcNAc...) asparagine; by host). Residues 378-391 (DRGWGNGCGLFGKG) are fusion peptide. Asparagine 433 is a glycosylation site (N-linked (GlcNAc...) asparagine; by host). 2 disulfide bridges follow: cysteine 465-cysteine 565 and cysteine 582-cysteine 613. A helical membrane pass occupies residues 726 to 746 (AAFSGVSWIMKILIGVIITWI). Residues 747–752 (GMNSRS) are Cytoplasmic-facing. The helical transmembrane segment at 753-773 (TSLSVSLVLVGVVTLYLGVMV) threads the bilayer. Residues 774–1195 (QADSGCVVSW…MVGATMTDDI (422 aa)) lie on the Extracellular side of the membrane. Disulfide bonds link cysteine 779–cysteine 790, cysteine 830–cysteine 918, cysteine 954–cysteine 998, cysteine 1055–cysteine 1104, cysteine 1066–cysteine 1088, and cysteine 1087–cysteine 1091. Residues asparagine 905 and asparagine 982 are each glycosylated (N-linked (GlcNAc...) asparagine; by host). Residues 1196-1220 (GMGVTYLALLAAFKVRPTFAAGLLL) traverse the membrane as a helical segment. At 1221-1226 (RKLTSK) the chain is on the cytoplasmic side. The chain crosses the membrane as a helical span at residues 1227-1245 (ELMMTTIGIVLLSQSTIPE). The Lumenal segment spans residues 1246–1269 (TILELTDALALGMMVLKMVRKMEK). Residues 1270–1290 (YQLAVTIMAILCVPNAVILQN) traverse the membrane as a helical segment. Alanine 1291 is a topological domain (cytoplasmic). The chain crosses the membrane as a helical span at residues 1292 to 1310 (WKVSCTILAVVSVSPLFLT). At 1311–1317 (SSQQKAD) the chain is on the lumenal side. The chain crosses the membrane as a helical span at residues 1318-1338 (WIPLALTIKGLNPTAIFLTTL). At 1339–1346 (SRTNKKRS) the chain is on the cytoplasmic side. The chain crosses the membrane as a helical span at residues 1347 to 1367 (WPLNEAIMAVGMVSILASSLL). Topologically, residues 1368-1370 (KND) are lumenal. The helical transmembrane segment at 1371-1391 (IPMTGPLVAGGLLTVCYVLTG) threads the bilayer. Residues 1392-1447 (RSADLELERAADVKWEDQAEISGSSPILSITISEDGSMSIKNEEEEQTLTILIRTG) are Cytoplasmic-facing. Residues 1398–1437 (LERAADVKWEDQAEISGSSPILSITISEDGSMSIKNEEEE) form an interacts with and activates NS3 protease region. An intramembrane region (helical) is located at residues 1448 to 1468 (LLVISGLFPVSIPITAAAWYL). The Cytoplasmic portion of the chain corresponds to 1469–2147 (WEVKKQRAGV…LSELPETLET (679 aa)). The region spanning 1476–1653 (AGVLWDVPSP…EKSIEDNPEI (178 aa)) is the Peptidase S7 domain. Active-site charge relay system; for serine protease NS3 activity residues include histidine 1526, aspartate 1550, and serine 1610. Residues 1655-1811 (DDIFRKRKLT…QSNAPIMDEE (157 aa)) form the Helicase ATP-binding domain. The important for RNA-binding stretch occupies residues 1659–1662 (RKRK). Position 1668–1675 (1668–1675 (LHPGAGKT)) interacts with ATP. Residues 1759-1762 (DEAH) carry the DEAH box motif. Positions 1821 to 1988 (SGHEWVTDFK…IIPSMFEPER (168 aa)) constitute a Helicase C-terminal domain. Lysine 1863 carries the N6-acetyllysine; by host modification. Residues 2148–2168 (LLLLTLLATVTGGIFLFLMSG) traverse the membrane as a helical segment. The Lumenal portion of the chain corresponds to 2169–2170 (RG). An intramembrane region (helical) is located at residues 2171-2191 (IGKMTLGMCCIITASILLWYA). Residue glutamine 2192 is a topological domain, lumenal. A helical membrane pass occupies residues 2193 to 2213 (IQPHWIAASIILEFFLIVLLI). Topologically, residues 2214–2228 (PEPEKQRTPQDNQLT) are cytoplasmic. Residues 2229–2249 (YVVIAILTVVAATMANEMGFL) form a helical membrane-spanning segment. Residues 2250–2274 (EKTKKDLGLGSITTQQPESNILDID) are Lumenal-facing. The segment at residues 2275–2295 (LRPASAWTLYAVATTFVTPML) is an intramembrane region (helical). At 2296–2316 (RHSIENSSVNVSLTAIANQAT) the chain is on the lumenal side. Residues asparagine 2301 and asparagine 2305 are each glycosylated (N-linked (GlcNAc...) asparagine; by host). An intramembrane region (helical) is located at residues 2317–2337 (VLMGLGKGWPLSKMDIGVPLL). Residues 2338-2347 (AIGCYSQVNP) are Lumenal-facing. A helical transmembrane segment spans residues 2348–2368 (ITLTAALFLLVAHYAIIGPGL). Topologically, residues 2369–2413 (QAKATREAQKRAAAGIMKNPTVDGITVIDLDPIPYDPKFEKQLGQ) are cytoplasmic. A helical membrane pass occupies residues 2414 to 2434 (VMLLVLCVTQVLMMRTTWALC). Residues 2435–2459 (EALTLATGPISTLWEGNPGRFWNTT) lie on the Lumenal side of the membrane. The N-linked (GlcNAc...) asparagine; by host glycan is linked to asparagine 2457. A helical transmembrane segment spans residues 2460-2480 (IAVSMANIFRGSYLAGAGLLF). At 2481-3391 (SIMKNTTNTR…KEEEEAGVLW (911 aa)) the chain is on the cytoplasmic side. One can recognise an mRNA cap 0-1 NS5-type MT domain in the interval 2493-2755 (TGNIGETLGE…DVDLGSGTRN (263 aa)). Residue serine 2547 coordinates S-adenosyl-L-methionine. Serine 2547 carries the post-translational modification Phosphoserine. The active-site For 2'-O-MTase activity is lysine 2552. The SUMO-interacting motif motif lies at 2568 to 2571 (VVDL). Residues glycine 2577, tryptophan 2578, threonine 2595, lysine 2596, aspartate 2622, and valine 2623 each coordinate S-adenosyl-L-methionine. Residue aspartate 2637 is the For 2'-O-MTase activity of the active site. Isoleucine 2638 provides a ligand contact to S-adenosyl-L-methionine. Residues lysine 2672 and glutamate 2708 each act as for 2'-O-MTase activity in the active site. Residue tyrosine 2710 participates in S-adenosyl-L-methionine binding. Glutamate 2929, histidine 2933, cysteine 2938, and cysteine 2941 together coordinate Zn(2+). Residues 3019-3168 (GAMYADDTAG…KPLDDRFASA (150 aa)) form the RdRp catalytic domain. Residues histidine 3203, cysteine 3219, and cysteine 3338 each contribute to the Zn(2+) site.

This sequence in the N-terminal section; belongs to the class I-like SAM-binding methyltransferase superfamily. mRNA cap 0-1 NS5-type methyltransferase family. As to quaternary structure, homodimer. Interacts (via N-terminus) with host EXOC1 (via C-terminus); this interaction results in EXOC1 degradation through the proteasome degradation pathway. In terms of assembly, forms heterodimers with envelope protein E in the endoplasmic reticulum and Golgi. Homodimer; in the endoplasmic reticulum and Golgi. Interacts with protein prM. Interacts with non-structural protein 1. As to quaternary structure, homodimer; Homohexamer when secreted. Interacts with envelope protein E. Interacts with host PRKAA1. In terms of assembly, interacts (via N-terminus) with serine protease NS3. Forms a heterodimer with serine protease NS3. May form homooligomers. As to quaternary structure, forms a heterodimer with NS2B. Interacts with NS4B. Interacts with unphosphorylated RNA-directed RNA polymerase NS5; this interaction stimulates RNA-directed RNA polymerase NS5 guanylyltransferase activity. Interacts with host SHFL. In terms of assembly, interacts with host MAVS; this interaction inhibits the synthesis of IFN-beta. Interacts with host MAVS; this interaction inhibits the synthesis of IFN-beta. Interacts with host SHFL. Interacts with host AUP1; the interaction occurs in the presence of Dengue virus NS4B and induces lipophagy which facilitates production of virus progeny particles. May interact with host SRPRA and SEC61G. Interacts with serine protease NS. As to quaternary structure, homodimer. Interacts with host STAT2; this interaction inhibits the phosphorylation of the latter, and, when all viral proteins are present (polyprotein), targets STAT2 for degradation. Interacts with serine protease NS3. Interacts with host PAF1 complex; the interaction may prevent the recruitment of the PAF1 complex to interferon-responsive genes, and thus reduces the immune response. Specific enzymatic cleavages in vivo yield mature proteins. Cleavages in the lumen of endoplasmic reticulum are performed by host signal peptidase, whereas cleavages in the cytoplasmic side are performed by serine protease NS3. Signal cleavage at the 2K-4B site requires a prior NS3 protease-mediated cleavage at the 4A-2K site. In terms of processing, cleaved in post-Golgi vesicles by a host furin, releasing the mature small envelope protein M, and peptide pr. This cleavage is incomplete as up to 30% of viral particles still carry uncleaved prM. Post-translationally, N-glycosylated. N-glycosylated. The excreted form is glycosylated and this is required for efficient secretion of the protein from infected cells. In terms of processing, acetylated by host KAT5. Acetylation modulates NS3 RNA-binding and unwinding activities and plays an important positive role for viral replication. Post-translationally, sumoylation of RNA-directed RNA polymerase NS5 increases NS5 protein stability allowing proper viral RNA replication. Phosphorylated on serines residues. This phosphorylation may trigger NS5 nuclear localization.

The protein resides in the virion. It is found in the host nucleus. It localises to the host cytoplasm. The protein localises to the host perinuclear region. Its subcellular location is the secreted. The protein resides in the virion membrane. It is found in the host endoplasmic reticulum membrane. It localises to the host mitochondrion. It carries out the reaction Selective hydrolysis of -Xaa-Xaa-|-Yaa- bonds in which each of the Xaa can be either Arg or Lys and Yaa can be either Ser or Ala.. The enzyme catalyses RNA(n) + a ribonucleoside 5'-triphosphate = RNA(n+1) + diphosphate. It catalyses the reaction a ribonucleoside 5'-triphosphate + H2O = a ribonucleoside 5'-diphosphate + phosphate + H(+). The catalysed reaction is ATP + H2O = ADP + phosphate + H(+). It carries out the reaction a 5'-end (5'-triphosphoguanosine)-ribonucleoside in mRNA + S-adenosyl-L-methionine = a 5'-end (N(7)-methyl 5'-triphosphoguanosine)-ribonucleoside in mRNA + S-adenosyl-L-homocysteine. The enzyme catalyses a 5'-end (N(7)-methyl 5'-triphosphoguanosine)-ribonucleoside in mRNA + S-adenosyl-L-methionine = a 5'-end (N(7)-methyl 5'-triphosphoguanosine)-(2'-O-methyl-ribonucleoside) in mRNA + S-adenosyl-L-homocysteine + H(+). Plays a role in virus budding by binding to the cell membrane and gathering the viral RNA into a nucleocapsid that forms the core of a mature virus particle. During virus entry, may induce genome penetration into the host cytoplasm after hemifusion induced by the surface proteins. Can migrate to the cell nucleus where it modulates host functions. Overcomes the anti-viral effects of host EXOC1 by sequestering and degrading the latter through the proteasome degradation pathway. In terms of biological role, inhibits RNA silencing by interfering with host Dicer. Its function is as follows. Prevents premature fusion activity of envelope proteins in trans-Golgi by binding to envelope protein E at pH6.0. After virion release in extracellular space, gets dissociated from E dimers. Functionally, acts as a chaperone for envelope protein E during intracellular virion assembly by masking and inactivating envelope protein E fusion peptide. prM is the only viral peptide matured by host furin in the trans-Golgi network probably to avoid catastrophic activation of the viral fusion activity in acidic Golgi compartment prior to virion release. prM-E cleavage is inefficient, and many virions are only partially matured. These uncleaved prM would play a role in immune evasion. May play a role in virus budding. Exerts cytotoxic effects by activating a mitochondrial apoptotic pathway through M ectodomain. May display a viroporin activity. In terms of biological role, binds to host cell surface receptor and mediates fusion between viral and cellular membranes. Envelope protein is synthesized in the endoplasmic reticulum in the form of heterodimer with protein prM. They play a role in virion budding in the ER, and the newly formed immature particle is covered with 60 spikes composed of heterodimer between precursor prM and envelope protein E. The virion is transported to the Golgi apparatus where the low pH causes dissociation of PrM-E heterodimers and formation of E homodimers. prM-E cleavage is inefficient, and many virions are only partially matured. These uncleaved prM would play a role in immune evasion. Its function is as follows. Involved in immune evasion, pathogenesis and viral replication. Once cleaved off the polyprotein, is targeted to three destinations: the viral replication cycle, the plasma membrane and the extracellular compartment. Essential for viral replication. Required for formation of the replication complex and recruitment of other non-structural proteins to the ER-derived membrane structures. Excreted as a hexameric lipoparticle that plays a role against host immune response. Antagonizing the complement function. Binds to the host macrophages and dendritic cells. Inhibits signal transduction originating from Toll-like receptor 3 (TLR3). Mediates complement activation, which may contribute to the pathogenesis of the vascular leakage that occurs in severe dengue disease. Activates autophagy through the AMPK/ERK/mTOR signaling pathway. Mechanistically, acts as the assembly platform for STK11-AMPK interactions and promotes STK11-AMPK interactions. In turn, promotes phosphorylation of the AMPK kinase structural domain and activates AMPK, thereby positively regulating the AMPK/ERK/mTOR signaling pathway and inducing autophagy. Functionally, disrupts the host endothelial glycocalyx layer of host pulmonary microvascular endothelial cells, inducing degradation of sialic acid and shedding of heparan sulfate proteoglycans. NS1 induces expression of sialidases, heparanase, and activates cathepsin L, which activates heparanase via enzymatic cleavage. These effects are probably linked to the endothelial hyperpermeability observed in severe dengue disease. Component of the viral RNA replication complex that functions in virion assembly and antagonizes the host immune response. In terms of biological role, required cofactor for the serine protease function of NS3. May have membrane-destabilizing activity and form viroporins. Its function is as follows. Displays three enzymatic activities: serine protease, NTPase and RNA helicase. NS3 serine protease, in association with NS2B, performs its autocleavage and cleaves the polyprotein at dibasic sites in the cytoplasm: C-prM, NS2A-NS2B, NS2B-NS3, NS3-NS4A, NS4A-2K and NS4B-NS5. NS3 RNA helicase binds RNA and unwinds dsRNA in the 3' to 5' direction. Functionally, regulates the ATPase activity of the NS3 helicase activity. NS4A allows NS3 helicase to conserve energy during unwinding. Plays a role in the inhibition of the host innate immune response. Interacts with host MAVS and thereby prevents the interaction between RIGI and MAVS. In turn, IFN-beta production is impaired. Interacts with host AUP1 which mediates induction of lipophagy in host cells and facilitates production of virus progeny particles. Functions as a signal peptide for NS4B and is required for the interferon antagonism activity of the latter. In terms of biological role, induces the formation of ER-derived membrane vesicles where the viral replication takes place. Inhibits interferon (IFN)-induced host STAT1 phosphorylation and nuclear translocation, thereby preventing the establishment of cellular antiviral state by blocking the IFN-alpha/beta pathway. Its function is as follows. Replicates the viral (+) and (-) RNA genome, and performs the capping of genomes in the cytoplasm. NS5 methylates viral RNA cap at guanine N-7 and ribose 2'-O positions. Besides its role in RNA genome replication, also prevents the establishment of cellular antiviral state by blocking the interferon-alpha/beta (IFN-alpha/beta) signaling pathway. Inhibits host TYK2 and STAT2 phosphorylation, thereby preventing activation of JAK-STAT signaling pathway. May reduce immune responses by preventing the recruitment of the host PAF1 complex to interferon-responsive genes. The chain is Genome polyprotein from Aedimorphus (Red guenon).